The sequence spans 167 residues: Small heat shock protein C1 (167 aa).

The 109-residue stretch at serine 59 to aspartate 167 folds into the sHSP domain.

This sequence belongs to the small heat shock protein (HSP20) family.

This Rickettsia conorii (strain ATCC VR-613 / Malish 7) protein is Small heat shock protein C1 (hspC1).